Reading from the N-terminus, the 277-residue chain is Phosphoenolpyruvate synthase regulatory protein (277 aa).

157–164 (GVSRCGKT) contacts ADP.

This sequence belongs to the pyruvate, phosphate/water dikinase regulatory protein family. PSRP subfamily.

The catalysed reaction is [pyruvate, water dikinase] + ADP = [pyruvate, water dikinase]-phosphate + AMP + H(+). It carries out the reaction [pyruvate, water dikinase]-phosphate + phosphate + H(+) = [pyruvate, water dikinase] + diphosphate. Its function is as follows. Bifunctional serine/threonine kinase and phosphorylase involved in the regulation of the phosphoenolpyruvate synthase (PEPS) by catalyzing its phosphorylation/dephosphorylation. The chain is Phosphoenolpyruvate synthase regulatory protein from Escherichia fergusonii (strain ATCC 35469 / DSM 13698 / CCUG 18766 / IAM 14443 / JCM 21226 / LMG 7866 / NBRC 102419 / NCTC 12128 / CDC 0568-73).